The following is a 462-amino-acid chain: Ketoisovalerate reductase (462 aa).

Positions 34-55 (PTAVKPDRADRGDFDPGKYPVD) are disordered. A compositionally biased stretch (basic and acidic residues) spans 38–49 (KPDRADRGDFDP). 72 to 77 (GPGNVG) serves as a coordination point for NADP(+). The Calmoduling-binding signature appears at 167-184 (ADRLRRYLGRCSSVVFAQ). Catalysis depends on K290, which acts as the Proton donor. Residues N294, N298, and S403 each coordinate substrate. E415 lines the NADP(+) pocket.

This sequence belongs to the ketopantoate reductase family. As to quaternary structure, homodimer. Binds to calmodulin in a calcium-independent manner.

It catalyses the reaction (R)-2-hydroxy-3-methylbutanoate + NADP(+) = 3-methyl-2-oxobutanoate + NADPH + H(+). Environmental stimuli such as light and salt stress suppress activity through stimulation of calmodulin (CaM) that binds BEA2 and probably impairs its dimerization. In terms of biological role, ketoisovalerate reductase; part of the gene cluster that mediates the biosynthesis of beauvericin (BEA), a non-ribosomal cyclic hexadepsipeptide that shows antibiotic, antifungal, insecticidal, and cancer cell antiproliferative and antihaptotactic activity. Ketoisovalerate reductase BEA2 catalyzes the NADPH-specific reduction of ketoisovaleric acid to hydroxyisovalerate, a precursor for beauvericin biosynthesis. The nonribosomal cyclodepsipeptide synthetase BEA1 then catalyzes the formation of beauvericin via condensation and cyclization of 3 dipeptidol monomers, each composed of one unit of hydroxyisovalerate and one unit of N-methyl-phenylalanine. This Beauveria bassiana (White muscardine disease fungus) protein is Ketoisovalerate reductase.